Here is a 1508-residue protein sequence, read N- to C-terminus: Pleiotropic ABC efflux transporter of multiple drugs CDR1 (1508 aa).

The tract at residues 1–30 is disordered; sequence MSEKPFVDAPPPEDGVAHQVSPHDNGSLSE. Over 1 to 524 the chain is Cytoplasmic; the sequence is MSEKPFVDAP…NFLRMKGDPS (524 aa). Positions 165–415 constitute an ABC transporter 1 domain; the sequence is DYWHDMRKID…FLDMGYECPQ (251 aa). The chain crosses the membrane as a helical span at residues 525-545; that stretch reads IVIFSIFGQGVMGLILSSVFY. Topologically, residues 546–559 are extracellular; the sequence is NLQPTTGSFYYRGA. A helical transmembrane segment spans residues 560–580; it reads AMFFAVLFNAFASLLEIMSLF. Residues 581–608 are Cytoplasmic-facing; sequence EARPIVEKHKKYALYRPSADALASIISE. A helical transmembrane segment spans residues 609–629; it reads LPVKLCMSTCFNFSFYFMVHF. At 630 to 633 the chain is on the extracellular side; that stretch reads RRDP. Residues 634-654 form a helical membrane-spanning segment; it reads GRFFFYWLFCGLCTLCMSHMF. Residues 655–673 lie on the Cytoplasmic side of the membrane; that stretch reads RSLGAVSTSLAAAMTPATS. The chain crosses the membrane as a helical span at residues 674–694; that stretch reads VLLAMVIFTGFVIPIPSMLGW. Residues 695-775 lie on the Extracellular side of the membrane; that stretch reads CRWIQYINPV…EYVNAHKWRN (81 aa). A helical membrane pass occupies residues 776–796; sequence LGIVVAYIVVFLGVYIALTEF. At 797–1203 the chain is on the cytoplasmic side; the sequence is NKGAMQKGEI…TFQQYWRSPG (407 aa). The tract at residues 839–860 is disordered; that stretch reads KISYSDAMEKDSGESSTSDDKL. Over residues 845–860 the composition is skewed to basic and acidic residues; it reads AMEKDSGESSTSDDKL. One can recognise an ABC transporter 2 domain in the interval 867–1110; sequence FHWKDLTYQV…GLIDYFEKHG (244 aa). 903–910 is an ATP binding site; sequence GASGAGKT. The helical transmembrane segment at 1204–1224 threads the bilayer; the sequence is YIYSKFFLVITASLFNGFAFF. Residues 1225–1239 lie on the Extracellular side of the membrane; it reads HSGTSQQGLQNQMFS. The helical transmembrane segment at 1240-1260 threads the bilayer; it reads MFMFYMPLQTLIQQMLPYYVM. Topologically, residues 1261–1288 are cytoplasmic; the sequence is QREIYEVREAPSRTFSWFAFIASQITTE. Residues 1289 to 1309 traverse the membrane as a helical segment; it reads IPFQVVLGTVAFFCWYYPVGL. Residues 1310-1326 lie on the Extracellular side of the membrane; it reads YQNATPTDTVHERGALM. Residues 1327–1347 traverse the membrane as a helical segment; that stretch reads WLLVTAFYVYTISLGQMVVAF. Over 1348–1362 the chain is Cytoplasmic; that stretch reads MEIADNAANMVNLMF. The helical transmembrane segment at 1363-1383 threads the bilayer; the sequence is IMCLNFCGVLATPEALPGFWI. Residues 1384 to 1475 are Extracellular-facing; sequence FMYRCNPFTY…HAVYSERWRN (92 aa). Residues 1476–1496 traverse the membrane as a helical segment; that stretch reads FGIFIAFIAINMIGTIFFYWL. At 1497–1508 the chain is on the cytoplasmic side; it reads ARVPKSSKSKNH.

It belongs to the ABC transporter superfamily.

The protein resides in the cell membrane. It catalyses the reaction fluconazole(in) + ATP + H2O = fluconazole(out) + ADP + phosphate + H(+). The catalysed reaction is itraconazole(in) + ATP + H2O = itraconazole(out) + ADP + phosphate + H(+). It carries out the reaction voriconazole(in) + ATP + H2O = voriconazole(out) + ADP + phosphate + H(+). The bis-benzodioxolylindolinone azoffluxin acts as an inhibitor of the transporter activity. Clorgyline analogs M19 and M25 inhibit the transcporter activity by uncoupling CDR1 ATPase activity from the active transport of substrates. Activity is also inhibited by beauvericin and oligomycin. Its function is as follows. Pleiotropic ABC efflux transporter that confers resistance to numerous chemicals including itraconazole, fluconazole, voriconazole and posaconazole. The chain is Pleiotropic ABC efflux transporter of multiple drugs CDR1 from Candidozyma auris (Yeast).